The chain runs to 581 residues: Multidrug resistance-like ATP-binding protein MdlA (581 aa).

The ABC transmembrane type-1 domain maps to Tyr-18–Arg-303. Helical transmembrane passes span Ile-23–Ile-43, Gly-53–Leu-73, Val-127–Leu-149, Ile-153–Ile-175, Val-247–Val-267, and Phe-280–Ile-300. The 235-residue stretch at Ile-337–His-571 folds into the ABC transporter domain. Gly-369 to Ser-376 is a binding site for ATP.

Belongs to the ABC transporter superfamily. Drug exporter-2 (TC 3.A.1.117) family.

The protein localises to the cell membrane. It carries out the reaction ATP + H2O + xenobioticSide 1 = ADP + phosphate + xenobioticSide 2.. In Buchnera aphidicola subsp. Schizaphis graminum (strain Sg), this protein is Multidrug resistance-like ATP-binding protein MdlA (mdlA).